Reading from the N-terminus, the 72-residue chain is Conotoxin VnMKLT2-021 (72 aa).

Positions 1–22 (MKLTCVLIVAVLFLTACQLTTA) are cleaved as a signal peptide. The propeptide occupies 23–45 (ASYARSEREHPDLGSSDQNSKLT). The tract at residues 25–44 (YARSEREHPDLGSSDQNSKL) is disordered. 3 disulfide bridges follow: Cys48–Cys62, Cys55–Cys66, and Cys61–Cys71.

This sequence belongs to the conotoxin O1 superfamily. Expressed by the venom duct.

The protein resides in the secreted. This is Conotoxin VnMKLT2-021 from Conus ventricosus (Mediterranean cone).